Reading from the N-terminus, the 657-residue chain is Methyl-accepting chemotaxis protein CtpL (657 aa).

The Cytoplasmic portion of the chain corresponds to 1 to 5 (MRLKQ). The helical transmembrane segment at 6–26 (LTNLNTLLLLTVCLALGITLW) threads the bilayer. The Periplasmic portion of the chain corresponds to 27–305 (WSQRAMERPF…ERQRLQGQVR (279 aa)). The chain crosses the membrane as a helical span at residues 306 to 326 (LIQGGMIALILLIALAIDSLQ). The HAMP domain occupies 327-380 (RRLARVLGQLVPALSAWADGDFSRPISLRTRTEDLRNLEDSLNRLRSFLAELVG). At 327 to 657 (RRLARVLGQL…LRTTVQAFRL (331 aa)) the chain is on the cytoplasmic side. The Methyl-accepting transducer domain occupies 385–621 (RAEQVAGSSQ…EIRSHSERIH (237 aa)).

Belongs to the methyl-accepting chemotaxis (MCP) protein family.

It localises to the cell inner membrane. In terms of biological role, chemotactic-signal transducers respond to changes in the concentration of attractants and repellents in the environment, transduce a signal from the outside to the inside of the cell, and facilitate sensory adaptation through the variation of the level of methylation. Chemoreceptor for inorganic phosphate, which is required for taxis at low concentrations of phosphate. Is also responsible for the positive chemotaxis toward 4-chloroaniline (4CA) and catechol. Does not recognize inorganic phosphate directly, but via a complex between the periplasmic protein PstS and inorganic phosphate. This chain is Methyl-accepting chemotaxis protein CtpL, found in Pseudomonas aeruginosa (strain ATCC 15692 / DSM 22644 / CIP 104116 / JCM 14847 / LMG 12228 / 1C / PRS 101 / PAO1).